The primary structure comprises 405 residues: Argininosuccinate synthase (405 aa).

An ATP-binding site is contributed by 11-19 (AYSGGLDTS). Tyr-90 is a binding site for L-citrulline. An ATP-binding site is contributed by Gly-119. Thr-121, Asn-125, and Asp-126 together coordinate L-aspartate. Position 125 (Asn-125) interacts with L-citrulline. 5 residues coordinate L-citrulline: Arg-129, Ser-178, Ser-187, Glu-263, and Tyr-275.

It belongs to the argininosuccinate synthase family. Type 1 subfamily. In terms of assembly, homotetramer.

The protein resides in the cytoplasm. It catalyses the reaction L-citrulline + L-aspartate + ATP = 2-(N(omega)-L-arginino)succinate + AMP + diphosphate + H(+). It functions in the pathway amino-acid biosynthesis; L-arginine biosynthesis; L-arginine from L-ornithine and carbamoyl phosphate: step 2/3. This chain is Argininosuccinate synthase, found in Legionella pneumophila subsp. pneumophila (strain Philadelphia 1 / ATCC 33152 / DSM 7513).